Reading from the N-terminus, the 725-residue chain is Dolichyl-phosphate-mannose--protein mannosyltransferase 5 (725 aa).

Transmembrane regions (helical) follow at residues 34–54 (QFAVFSILLISLIRLYKLYIP), 117–137 (YLWLRLFSGICGIGHVLLTFF), 145–165 (SVISIVITILICLENSMVTVS), 192–212 (IPFTGCWYFNLFVTGIALGLN), 219–239 (GLFTFAWVGILTCVQLWEILG), and 256–276 (VVAFIMVPLTIYCSVFYIHFE). 3 MIR domains span residues 303-356 (PLQV…IETK), 368-427 (QREV…IRML), and 439-495 (LIKL…VESS). Residue N409 is glycosylated (N-linked (GlcNAc...) asparagine). 4 helical membrane passes run 570–590 (IYYLGNVAIYYSVFFVGLIAI), 619–639 (FYNNSWPYLVGWFINYIPYCL), 644–664 (LYLHHYLSALNFGILLLSQYL), and 673–693 (IIGGIITATIFVSAIYCFYEF).

The protein belongs to the glycosyltransferase 39 family.

Its subcellular location is the endoplasmic reticulum membrane. It catalyses the reaction a di-trans,poly-cis-dolichyl beta-D-mannosyl phosphate + L-seryl-[protein] = 3-O-(alpha-D-mannosyl)-L-seryl-[protein] + a di-trans,poly-cis-dolichyl phosphate + H(+). The enzyme catalyses a di-trans,poly-cis-dolichyl beta-D-mannosyl phosphate + L-threonyl-[protein] = 3-O-(alpha-D-mannosyl)-L-threonyl-[protein] + a di-trans,poly-cis-dolichyl phosphate + H(+). The protein operates within protein modification; protein glycosylation. Its function is as follows. Protein mannosyltransferase (PMT) involved in hyphal morphogenesis and drug sensitivity. Transfers mannose from Dol-P-mannose to Ser or Thr residues on proteins. PMT1, PMT2 and PMT4 account for most of the protein-O-glycosylation activity, while PMT5 and PMT6 may specifically modulate a much narrower spectrum of target proteins. Required for biofilm formation. This chain is Dolichyl-phosphate-mannose--protein mannosyltransferase 5, found in Candida albicans (strain SC5314 / ATCC MYA-2876) (Yeast).